Reading from the N-terminus, the 208-residue chain is Thymidylate kinase (208 aa).

Residue 12-19 (GVDGAGKS) participates in ATP binding.

This sequence belongs to the thymidylate kinase family.

The enzyme catalyses dTMP + ATP = dTDP + ADP. Phosphorylation of dTMP to form dTDP in both de novo and salvage pathways of dTTP synthesis. This is Thymidylate kinase from Bordetella bronchiseptica (strain ATCC BAA-588 / NCTC 13252 / RB50) (Alcaligenes bronchisepticus).